Consider the following 92-residue polypeptide: MTRSLKKGPFVANHLLRKIENLNLRKEKKIIVTRSRASTIVPTMIGHTIAVYNGQEHLPIYITDRMIGHKLGEFVPTRIFRGHARSDKKSRR.

Belongs to the universal ribosomal protein uS19 family.

The protein localises to the plastid. It is found in the chloroplast. Functionally, protein S19 forms a complex with S13 that binds strongly to the 16S ribosomal RNA. The protein is Small ribosomal subunit protein uS19c of Angiopteris evecta (Mule's foot fern).